Here is a 457-residue protein sequence, read N- to C-terminus: Probable ECA polymerase (457 aa).

Helical transmembrane passes span 3–23 (LLQF…ILTL), 41–61 (MLFL…VFGF), 65–85 (VVPA…YAIY), 118–138 (IMAL…GFLL), 154–174 (GVAL…VYFL), 181–201 (WLLF…IVGG), 206–226 (IIIA…ITLW), 227–247 (MLAL…LKRY), 340–360 (LVVM…GLII), 377–397 (YKAA…IVLA), and 408–428 (VVFF…LYWL).

Belongs to the WzyE family. Probably part of a complex composed of WzxE, WzyE and WzzE.

Its subcellular location is the cell inner membrane. Its pathway is bacterial outer membrane biogenesis; enterobacterial common antigen biosynthesis. In terms of biological role, probably involved in the polymerization of enterobacterial common antigen (ECA) trisaccharide repeat units. The polypeptide is Probable ECA polymerase (Erwinia tasmaniensis (strain DSM 17950 / CFBP 7177 / CIP 109463 / NCPPB 4357 / Et1/99)).